The chain runs to 349 residues: GTP 3',8-cyclase (349 aa).

Residues 24 to 249 form the Radical SAM core domain; the sequence is PFGRAITYLR…VDSDYQTGGP (226 aa). R33 lines the GTP pocket. The [4Fe-4S] cluster site is built by C40 and C44. Y46 contacts S-adenosyl-L-methionine. Residue C47 coordinates [4Fe-4S] cluster. Residue R82 participates in GTP binding. An S-adenosyl-L-methionine-binding site is contributed by G86. T116 lines the GTP pocket. S140 is a binding site for S-adenosyl-L-methionine. GTP is bound at residue K176. M210 provides a ligand contact to S-adenosyl-L-methionine. 2 residues coordinate [4Fe-4S] cluster: C273 and C276. GTP is bound at residue 278–280; it reads RVR. C290 contributes to the [4Fe-4S] cluster binding site.

This sequence belongs to the radical SAM superfamily. MoaA family. In terms of assembly, monomer and homodimer. [4Fe-4S] cluster serves as cofactor.

It catalyses the reaction GTP + AH2 + S-adenosyl-L-methionine = (8S)-3',8-cyclo-7,8-dihydroguanosine 5'-triphosphate + 5'-deoxyadenosine + L-methionine + A + H(+). It participates in cofactor biosynthesis; molybdopterin biosynthesis. Its function is as follows. Catalyzes the cyclization of GTP to (8S)-3',8-cyclo-7,8-dihydroguanosine 5'-triphosphate. The chain is GTP 3',8-cyclase from Agrobacterium fabrum (strain C58 / ATCC 33970) (Agrobacterium tumefaciens (strain C58)).